Here is an 843-residue protein sequence, read N- to C-terminus: Taste receptor type 1 member 2 (843 aa).

The signal sequence occupies residues 1–19 (MGPQARTLHLLFLLLHALP). Residues 20 to 570 (KPVMLVGNSD…AFLEWHEVPT (551 aa)) are Extracellular-facing. Residues Asn-87, Asn-296, Asn-316, Asn-355, Asn-372, Asn-432, Asn-484, Asn-491, and Asn-531 are each glycosylated (N-linked (GlcNAc...) asparagine). The helical transmembrane segment at 571–591 (IVVTILAALGFISTLAILLIF) threads the bilayer. At 592-606 (WRHFQTPMVRSAGGP) the chain is on the cytoplasmic side. A helical transmembrane segment spans residues 607-627 (MCFLMLVPLLLAFGMVPVYVG). Residues 628 to 642 (PPTVFSCFCRQAFFT) are Extracellular-facing. A helical transmembrane segment spans residues 643-663 (VCFSVCLSCITVRSFQIVCVF). Topologically, residues 664-682 (KMARRLPSAYGFWMRYHGP) are cytoplasmic. A helical transmembrane segment spans residues 683-703 (YVFVAFITAVKVALVAGNMLA). The Extracellular portion of the chain corresponds to 704-731 (TTINPIGRTDPDDPNIIILSCHPNYRNG). The chain crosses the membrane as a helical span at residues 732–752 (LLFNTSMDLLLSVLGFSFAYV). Topologically, residues 753–764 (GKELPTNYNEAK) are cytoplasmic. Residues 765 to 785 (FITLSMTFSFTSSISLCTFMS) form a helical membrane-spanning segment. Residues 786–789 (VHDG) lie on the Extracellular side of the membrane. A helical transmembrane segment spans residues 790-810 (VLVTIMDLLVTVLNFLAIGLG). Residues 811-843 (YFGPKCYMILFYPERNTSAYFNSMIQGYTMRKS) are Cytoplasmic-facing.

This sequence belongs to the G-protein coupled receptor 3 family. TAS1R subfamily. Forms heterodimers with TAS1R3. As to expression, expressed mainly in circumvallate and foliate taste papillae.

It localises to the cell membrane. Putative taste receptor. TAS1R2/TAS1R3 recognizes diverse natural and synthetic sweeteners. The chain is Taste receptor type 1 member 2 (Tas1r2) from Mus musculus (Mouse).